The chain runs to 78 residues: Xibalbin-13 1 (78 aa).

The N-terminal stretch at 1-27 is a signal peptide; the sequence is MKEANTRRYIHLCLVVVLVSTIITTEA. The propeptide occupies 28 to 31; it reads EDDR. 4 disulfides stabilise this stretch: cysteine 34/cysteine 49, cysteine 41/cysteine 54, cysteine 48/cysteine 65, and cysteine 56/cysteine 63. The residue at position 76 (serine 76) is a Serine amide.

This sequence belongs to the xibalbin-13 family. As to expression, expressed by the venom gland.

Its subcellular location is the secreted. In terms of biological role, probable neurotoxin. Strongly inhibits voltage-gated potassium channels (Kv1.1/KCNA1, Kv1.2/KCNA2, Kv1.3/KCNA3, and Kv1.6/KCNA6) and mildly inhibits sodium channels (Nav1.2/SCN2A, Nav1.4/SCN4A, Nav1.5/SCN5A, Nav1.6/SCN8A, and BgNav). Induces activation of protein kinase A type II (PKA-II) and MAP kinase Erk1/2 in primary nociceptive and non-nociceptive sensory neurons. Does not show cytotoxic activity. Does not have an impact on Ca2+, cAMP, and NO signaling in the cell types analyzed. Does not interfere with the adhesion of leukocytes to endothelial cells. This Xibalbanus tulumensis (Blind cave remipede) protein is Xibalbin-13 1.